A 132-amino-acid chain; its full sequence is Fatty acid-binding protein, adipocyte (132 aa).

Cys2 carries the N-acetylcysteine modification. At Ser13 the chain carries Phosphoserine. Tyr20 bears the Phosphotyrosine; by Tyr-kinases mark. Positions 22 to 32 (KEVGVGFATRK) match the Nuclear localization signal motif. 127-129 (RVY) is an a fatty acid binding site.

Belongs to the calycin superfamily. Fatty-acid binding protein (FABP) family. In terms of assembly, monomer. Homodimer. Interacts with PPARG.

It localises to the cytoplasm. The protein resides in the nucleus. Lipid transport protein in adipocytes. Binds both long chain fatty acids and retinoic acid. Delivers long-chain fatty acids and retinoic acid to their cognate receptors in the nucleus. This is Fatty acid-binding protein, adipocyte (Fabp4) from Rattus norvegicus (Rat).